The primary structure comprises 374 residues: Alpha-galactosylglucosyldiacylglycerol synthase (374 aa).

Belongs to the glycosyltransferase group 1 family. Glycosyltransferase 4 subfamily. Mg(2+) serves as cofactor.

The protein resides in the cell membrane. It catalyses the reaction a 1,2-diacyl-3-O-(alpha-D-glucopyranosyl)-sn-glycerol + UDP-alpha-D-galactose = a 1,2-diacyl-3-O-[alpha-D-galactopyranosyl-(1-&gt;2)-alpha-D-glucopyranosyl]-sn-glycerol + UDP + H(+). Activated by the negatively charged lipid phosphatidylglycerol (PG). Galactosyltransferase involved in the biosynthesis of the bilayer-forming membrane lipid alpha-galactosyl-glucosyldiacylglycerol which is involved in maintaining constant nonbilayer/bilayer conditions (curvature packing stress). Also involved in the beta-lactam resistance. Catalyzes the transfer of a galactosyl residue from UDP-Gal to alpha-glucosyl-DAG (1,2-diacyl-3-O-(alpha-D-glucopyranosyl)-sn-glycerol) acceptor to form the corresponding galactosyl-glycosyl-DAG product (3-O-alpha-(D-galactopyranosyl-alpha-(1-&gt;2)-D-glucopyranosyl)-1,2-diacyl-sn-glycerol). It can only use UDP-Gal as sugar donor and alpha-glucosyl-DAG is the preferred sugar acceptor. The chain is Alpha-galactosylglucosyldiacylglycerol synthase (cpoA) from Streptococcus pneumoniae (strain ATCC BAA-255 / R6).